A 397-amino-acid chain; its full sequence is ATP phosphoribosyltransferase regulatory subunit (397 aa).

It belongs to the class-II aminoacyl-tRNA synthetase family. HisZ subfamily. As to quaternary structure, heteromultimer composed of HisG and HisZ subunits.

It localises to the cytoplasm. It functions in the pathway amino-acid biosynthesis; L-histidine biosynthesis; L-histidine from 5-phospho-alpha-D-ribose 1-diphosphate: step 1/9. Its function is as follows. Required for the first step of histidine biosynthesis. May allow the feedback regulation of ATP phosphoribosyltransferase activity by histidine. The sequence is that of ATP phosphoribosyltransferase regulatory subunit from Halalkalibacterium halodurans (strain ATCC BAA-125 / DSM 18197 / FERM 7344 / JCM 9153 / C-125) (Bacillus halodurans).